The chain runs to 443 residues: Phosphatidate cytidylyltransferase 2 (443 aa).

Basic and acidic residues predominate over residues 1–38 (MTELRQRAVREDAPPEDKESESEAKLDGETASDSESRA). The tract at residues 1-51 (MTELRQRAVREDAPPEDKESESEAKLDGETASDSESRAETAPPPTSIDDTP) is disordered. Ser-20 is modified (phosphoserine). The residue at position 30 (Thr-30) is a Phosphothreonine. Phosphoserine is present on residues Ser-32, Ser-34, and Ser-36. Thr-50 bears the Phosphothreonine mark. The next 6 membrane-spanning stretches (helical) occupy residues 78 to 98 (MIAFFFIIIYLGPMVLMMIVM), 129 to 149 (WYFLLCVNYFFYGETVTDYFF), 165 to 185 (HRFISFTLYLTGFCMFVLSLV), 212 to 232 (LVIHNLFEGMIWFIVPISCVI), 261 to 281 (GFIGGFFATVVFGLLLSYVMS), and 338 to 358 (SALSTFASLIGPFGGFFASGF).

The protein belongs to the CDS family. Homodimer.

The protein localises to the endoplasmic reticulum membrane. It catalyses the reaction a 1,2-diacyl-sn-glycero-3-phosphate + CTP + H(+) = a CDP-1,2-diacyl-sn-glycerol + diphosphate. It carries out the reaction 1-octadecanoyl-2-(5Z,8Z,11Z,14Z-eicosatetraenoyl)-sn-glycero-3-phosphate + CTP + H(+) = 1-octadecanoyl-2-(5Z,8Z,11Z,14Z-eicosatetraenoyl)-sn-glycero-3-cytidine-5'-diphosphate + diphosphate. The enzyme catalyses 1-octadecanoyl-2-(9Z,12Z-octadecadienoyl)-sn-glycero-3-phosphate + CTP + H(+) = 1-octadecanoyl-2-(9Z,12Z-octadecadienoyl)-sn-glycero-3-cytidine-5'-diphosphate + diphosphate. The catalysed reaction is 1-hexadecanoyl-2-(5Z,8Z,11Z,14Z-eicosatetraenoyl)-sn-glycero-3-phosphate + CTP + H(+) = 1-hexadecanoyl-2-(5Z,8Z,11Z,14Z-eicosatetraenoyl)-sn-glycero-3-cytidine-5'-diphosphate + diphosphate. It catalyses the reaction 1,2-di-(5Z,8Z,11Z,14Z)-eicosatetraenoyl-sn-glycero-3-phosphate + CTP + H(+) = 1,2-di-(5Z,8Z,11Z,14Z-eicosatetraenoyl)-sn-glycero-3-cytidine-5'-diphosphate + diphosphate. It carries out the reaction 1-octadecanoyl-2-(9Z-octadecenoyl)-sn-glycero-3-phosphate + CTP + H(+) = 1-octadecanoyl-2-(9Z-octadecenoyl)-sn-glycero-3-cytidine-5'-diphosphate + diphosphate. The enzyme catalyses 1-octadecanoyl-2-(4Z,7Z,10Z,13Z,16Z,19Z-docosahexaenoyl)-sn-glycero-3-phosphate + CTP + H(+) = 1-octadecanoyl-2-(4Z,7Z,10Z,13Z,16Z,19Z-docosahexaenoyl)-sn-glycero-3-cytidine-5'-diphosphate + diphosphate. The catalysed reaction is 1,2-di-(9Z,12Z-octadecadienoyl)-sn-glycero-3-phosphate + CTP + H(+) = 1,2-di-(9Z,12Z-octadecadienoyl)-sn-glycero-3-cytidine-5'-diphosphate + diphosphate. It catalyses the reaction 1,2-di-(9Z-octadecenoyl)-sn-glycero-3-phosphate + CTP + H(+) = 1,2-di-(9Z-octadecenoyl)-sn-glycero-3-cytidine-5'-diphosphate + diphosphate. Its pathway is phospholipid metabolism; CDP-diacylglycerol biosynthesis; CDP-diacylglycerol from sn-glycerol 3-phosphate: step 3/3. Catalyzes the conversion of phosphatidic acid (PA) to CDP-diacylglycerol (CDP-DAG), an essential intermediate in the synthesis of phosphatidylglycerol, cardiolipin and phosphatidylinositol. Exhibits specificity for the nature of the acyl chains at the sn-1 and sn-2 positions in the substrate, PA and the preferred acyl chain composition is 1-stearoyl-2-arachidonoyl-sn-phosphatidic acid. Plays an important role in regulating the growth and maturation of lipid droplets which are storage organelles at the center of lipid and energy homeostasis. The chain is Phosphatidate cytidylyltransferase 2 from Rattus norvegicus (Rat).